A 526-amino-acid polypeptide reads, in one-letter code: Tyrosine 2,3-aminomutase (526 aa).

Residue tyrosine 41 is the Proton donor/acceptor of the active site. Histidine 71 serves as a coordination point for substrate. The segment at residues 130–132 (ASG) is a cross-link (5-imidazolinone (Ala-Gly)). 2,3-didehydroalanine (Ser) is present on serine 131. Asparagine 183 and arginine 288 together coordinate substrate.

The protein belongs to the TAL/TAM family. In terms of assembly, homotetramer; dimer of dimers. Post-translationally, contains an active site 4-methylidene-imidazol-5-one (MIO), which is formed autocatalytically by cyclization and dehydration of residues Ala-Ser-Gly.

The catalysed reaction is L-tyrosine = 3-amino-3-(4-hydroxyphenyl)propanoate. It catalyses the reaction L-tyrosine = (E)-4-coumarate + NH4(+). Its function is as follows. Has aminomutase and, to a much lesser extent, ammonia-lyase activity. Primarily, catalyzes the rearrangement of L-tyrosine to S-beta-tyrosine, which is probably incorporated into secondary metabolite myxovalargin. The aminomutase activity exclusively produces S-beta-tyrosine. The protein is Tyrosine 2,3-aminomutase of Myxococcus fulvus.